The chain runs to 549 residues: MARDATKLEATVAKLKKHWAESAPRDMRAAFSADPGRFGRYSLCLDDLLFDWSKCRVNDETMALLKELAVAADVEGRRAAMFAGEHINNTEDRAVLHVALRDTSSKEVLVDGHNVLPDVKHVLDRMAAFADGIRSGALKGATGRKITDIVNIGIGGSDLGPVMATLALAPYHDEPRAHFVSNIDGAHIADTLSPLDPASTLIIVASKTFTTIETMTNAQTARKWVADTLGEAAVGAHFAAVSTALDKVAAFGIPEDRVFGFWDWVGGRYSVWSAIGLPVMIAVGPDNFRKFLAGAHAMDVHFRDAPLEKNLPVMLGLIGYWHRAICGYGSRAIIPYDQRLSRLPAYLQQLDMESNGKSVTLDGKPVSGPTGPVVWGEPGTNGQHAFFQLLHQGTDTIPLEFIVAAKGHEPTLDHQHEMLMANCLAQSEALMKGRTLDEARAQLQAKNLPASQVERIAPHRVFSGNRPSLTLIHDMLDPYTLGRLIALYEHRVFVEAQIFGINAFDQWGVELGKELATELLPVVSGKEGASGRDASTQGLVAHLHARRKA.

Catalysis depends on E353, which acts as the Proton donor. Active-site residues include H384 and K513.

Belongs to the GPI family.

The protein resides in the cytoplasm. It carries out the reaction alpha-D-glucose 6-phosphate = beta-D-fructose 6-phosphate. The protein operates within carbohydrate biosynthesis; gluconeogenesis. It functions in the pathway carbohydrate degradation; glycolysis; D-glyceraldehyde 3-phosphate and glycerone phosphate from D-glucose: step 2/4. In terms of biological role, catalyzes the reversible isomerization of glucose-6-phosphate to fructose-6-phosphate. The sequence is that of Glucose-6-phosphate isomerase from Brucella melitensis biotype 2 (strain ATCC 23457).